Here is a 429-residue protein sequence, read N- to C-terminus: UDP-N-acetylglucosamine 1-carboxyvinyltransferase (429 aa).

A phosphoenolpyruvate-binding site is contributed by 22–23; that stretch reads KN. R102 serves as a coordination point for UDP-N-acetyl-alpha-D-glucosamine. The Proton donor role is filled by C126. The residue at position 126 (C126) is a 2-(S-cysteinyl)pyruvic acid O-phosphothioketal. UDP-N-acetyl-alpha-D-glucosamine-binding positions include 131–135, D316, and I338; that span reads RPVDL.

This sequence belongs to the EPSP synthase family. MurA subfamily.

It is found in the cytoplasm. It catalyses the reaction phosphoenolpyruvate + UDP-N-acetyl-alpha-D-glucosamine = UDP-N-acetyl-3-O-(1-carboxyvinyl)-alpha-D-glucosamine + phosphate. The protein operates within cell wall biogenesis; peptidoglycan biosynthesis. Its function is as follows. Cell wall formation. Adds enolpyruvyl to UDP-N-acetylglucosamine. The protein is UDP-N-acetylglucosamine 1-carboxyvinyltransferase of Nitrobacter hamburgensis (strain DSM 10229 / NCIMB 13809 / X14).